A 600-amino-acid chain; its full sequence is 1-deoxy-D-xylulose-5-phosphate synthase (600 aa).

Thiamine diphosphate contacts are provided by residues histidine 57 and 98–100 (GHA). Aspartate 125 lines the Mg(2+) pocket. Thiamine diphosphate-binding positions include 126–127 (AS), asparagine 155, tyrosine 264, and glutamate 343. Asparagine 155 serves as a coordination point for Mg(2+).

This sequence belongs to the transketolase family. DXPS subfamily. In terms of assembly, homodimer. Mg(2+) serves as cofactor. The cofactor is thiamine diphosphate.

It carries out the reaction D-glyceraldehyde 3-phosphate + pyruvate + H(+) = 1-deoxy-D-xylulose 5-phosphate + CO2. The protein operates within metabolic intermediate biosynthesis; 1-deoxy-D-xylulose 5-phosphate biosynthesis; 1-deoxy-D-xylulose 5-phosphate from D-glyceraldehyde 3-phosphate and pyruvate: step 1/1. Functionally, catalyzes the acyloin condensation reaction between C atoms 2 and 3 of pyruvate and glyceraldehyde 3-phosphate to yield 1-deoxy-D-xylulose-5-phosphate (DXP). The polypeptide is 1-deoxy-D-xylulose-5-phosphate synthase (Fusobacterium nucleatum subsp. nucleatum (strain ATCC 25586 / DSM 15643 / BCRC 10681 / CIP 101130 / JCM 8532 / KCTC 2640 / LMG 13131 / VPI 4355)).